A 185-amino-acid polypeptide reads, in one-letter code: Ribosome-recycling factor (185 aa).

Belongs to the RRF family.

It localises to the cytoplasm. Responsible for the release of ribosomes from messenger RNA at the termination of protein biosynthesis. May increase the efficiency of translation by recycling ribosomes from one round of translation to another. In Wolbachia pipientis subsp. Culex pipiens (strain wPip), this protein is Ribosome-recycling factor.